The following is a 437-amino-acid chain: Vasoactive intestinal polypeptide receptor 2 (437 aa).

A signal peptide spans 1–22 (MRASVVLTCYCWLLVRVSSIHP). The Extracellular portion of the chain corresponds to 23-123 (ECRFHLEIQE…EDESKISFYI (101 aa)). 3 cysteine pairs are disulfide-bonded: cysteine 37–cysteine 60, cysteine 51–cysteine 92, and cysteine 74–cysteine 108. N-linked (GlcNAc...) asparagine glycosylation is found at asparagine 57, asparagine 87, and asparagine 91. A helical transmembrane segment spans residues 124 to 149 (LVKAIYTLGYSVSLMSLTTGSIIICL). The Cytoplasmic portion of the chain corresponds to 150–157 (FRKLHCTR). The chain crosses the membrane as a helical span at residues 158–179 (NYIHLNLFLSFMLRAISVLVKD). Topologically, residues 180–202 (SVLYSSSGLLRCHDQPASWVGCK) are extracellular. Cysteine 201 and cysteine 270 are oxidised to a cystine. Residues 203 to 227 (LSLVFFQYCIMANFYWLLVEGLYLH) form a helical membrane-spanning segment. Topologically, residues 228-238 (TLLVAILPPSR) are cytoplasmic. Residues 239–260 (CFLAYLLIGWGIPSVCIGAWTA) form a helical membrane-spanning segment. The Extracellular segment spans residues 261 to 279 (TRLSLEDTGCWDTNDHSIP). Residues 280–303 (WWVIRMPILISIVVNFALFISIVR) traverse the membrane as a helical segment. The Cytoplasmic portion of the chain corresponds to 304-324 (ILLQKLTSPDVGGNDQSQYKR). Residues 325–345 (LAKSTLLLIPLFGVHYMVFAA) form a helical membrane-spanning segment. At 346-353 (FPIGISST) the chain is on the extracellular side. A helical transmembrane segment spans residues 354–377 (YQILFELCVGSFQGLVVAVLYCFL). Residues 378-437 (NSEVQCELKRRWRGLCLTQAGSRDYRLHSWSMSRNGSESALQIHRGSRTQSFLQSETSVI) lie on the Cytoplasmic side of the membrane.

The protein belongs to the G-protein coupled receptor 2 family. As to quaternary structure, interacts with ADCYAP1/PACAP (via N-terminal extracellular domain); activated by PACAP27 and CAPAC38 neuropeptides. Interacts with VIP; the interaction results in VIPR1 activation. Expressed at high levels in the MIN6 cells, at moderate levels in pancreatic islets, insulin-secreting cells, lung, brain, stomach, and colon, and at low levels in the heart.

It is found in the cell membrane. Its function is as follows. G protein-coupled receptor activated by the neuropeptides vasoactive intestinal peptide (VIP) and pituitary adenylate cyclase-activating polypeptide (ADCYAP1/PACAP). Binds VIP and both PACAP27 and PACAP38 bioactive peptides with the order of ligand affinity of VIP = PACAP38 &gt; PACAP27. Ligand binding causes a conformation change that triggers signaling via guanine nucleotide-binding proteins (G proteins) and modulates the activity of downstream effectors. Activates cAMP-dependent pathway. May be coupled to phospholipase C. The chain is Vasoactive intestinal polypeptide receptor 2 from Mus musculus (Mouse).